An 892-amino-acid chain; its full sequence is Protein argonaute 11 (892 aa).

Residues 1-17 (MSSRGGGVGGRRGGPGG) show a composition bias toward gly residues. Disordered regions lie at residues 1-68 (MSSR…ALQP) and 86-117 (MEAREGASSSSSASAPAVGEVEPPSRAVGALP). Low complexity predominate over residues 86 to 107 (MEAREGASSSSSASAPAVGEVE). The region spanning 248-362 (SLKQFLAGTY…LPMEVCRIVK (115 aa)) is the PAZ domain. One can recognise a Piwi domain in the interval 541-848 (LLVIVLPDAN…AASRARHYLE (308 aa)). The disordered stretch occupies residues 850–876 (GSLPDHGSSSASAAGGSRRNDRGVPVK). Residues 856 to 866 (GSSSASAAGGS) are compositionally biased toward low complexity. The segment covering 867–876 (RRNDRGVPVK) has biased composition (basic and acidic residues).

It belongs to the argonaute family. Ago subfamily.

Probably involved in the RNA silencing pathway. May bind to short RNAs such as microRNAs (miRNAs) or short interfering RNAs (siRNAs), and represses the translation of mRNAs which are complementary to them. This is Protein argonaute 11 (AGO11) from Oryza sativa subsp. japonica (Rice).